A 121-amino-acid polypeptide reads, in one-letter code: Nitrogen fixation nifHD region glnB-like protein 2 (121 aa).

The protein belongs to the P(II) protein family.

Functionally, could be involved in the regulation of nitrogen fixation. This is Nitrogen fixation nifHD region glnB-like protein 2 (glnBII) from Methanococcus maripaludis (Methanococcus deltae).